The primary structure comprises 1400 residues: DNA topoisomerase 2 (1400 aa).

A compositionally biased stretch (low complexity) spans 1–30; the sequence is MSSFESDSASDAESAFSDASSDFTPSSSVK. The segment at 1-57 is disordered; it reads MSSFESDSASDAESAFSDASSDFTPSSSVKSKGKVPLRDSTNTTAQPSAPATGDASD. The segment covering 39-57 has biased composition (polar residues); the sequence is DSTNTTAQPSAPATGDASD. Residues Asn117, Asn146, 174–176, and 187–194 contribute to the ATP site; these read SSN and GRNGYGAK. The segment at 379 to 386 is interaction with DNA; sequence TKKEKGKK. An ATP-binding site is contributed by 415-417; the sequence is QTK. The Toprim domain occupies 497–613; that stretch reads CTLILTEGDS…GLLEIPGFLL (117 aa). Mg(2+) is bound by residues Glu503, Asp582, and Asp584. The Topo IIA-type catalytic domain maps to 749–1214; that stretch reads IPSILDGFKP…SAKDLWNSDL (466 aa). Tyr839 (O-(5'-phospho-DNA)-tyrosine intermediate) is an active-site residue. The tract at residues 1019–1028 is interaction with DNA; the sequence is KLISSISLSN. The disordered stretch occupies residues 1235 to 1400; that stretch reads FGPTAKTSTR…NESDEDYMSE (166 aa). Residues 1262–1271 are compositionally biased toward low complexity; the sequence is SSTPKASTPT. Residues 1312-1321 show a composition bias toward basic residues; that stretch reads PKRKTPKSKP. Acidic residues predominate over residues 1389–1400; it reads DGNESDEDYMSE.

The protein belongs to the type II topoisomerase family. In terms of assembly, homodimer. Mg(2+) serves as cofactor. Mn(2+) is required as a cofactor. Requires Ca(2+) as cofactor.

It localises to the nucleus. It carries out the reaction ATP-dependent breakage, passage and rejoining of double-stranded DNA.. In terms of biological role, control of topological states of DNA by transient breakage and subsequent rejoining of DNA strands. Topoisomerase II makes double-strand breaks. This Meyerozyma guilliermondii (strain ATCC 6260 / CBS 566 / DSM 6381 / JCM 1539 / NBRC 10279 / NRRL Y-324) (Yeast) protein is DNA topoisomerase 2 (TOP2).